The chain runs to 510 residues: Laccase (510 aa).

4 consecutive Plastocyanin-like domains span residues P45 to K79, K99 to D174, Y242 to K317, and L372 to M506. Positions 103, 105, 151, and 153 each coordinate Cu cation. Positions 419, 422, 424, 491, 492, 493, 497, and 502 each coordinate Cu cation.

The protein belongs to the multicopper oxidase family. Requires Cu(2+) as cofactor.

It catalyses the reaction 4 hydroquinone + O2 = 4 benzosemiquinone + 2 H2O. Its activity is regulated as follows. Resistant to alkali and organic solvents such as methanol, ethanol and acetone. Resistant to EDTA, which might be explained by the spatial protection of copper ions in the active sites. Inhibited by DMSO. Strongly inhibited by Fe(2+) and DTT. Functionally, multicopper oxidase that catalyzes the oxidation of a variety of substrates, including phenolic and non-phenolic compounds. Substrates include 2,6-dimethoxyphenol (2,6-DMP) and the non-phenolic compound 2,2'-azino-bis(3-ethylbenzothiazoline-6-sulfonic acid) (ABTS). Cannot use guaiacol and catechol. In Bacillus stratosphericus, this protein is Laccase.